The sequence spans 545 residues: Ubiquitin carboxyl-terminal hydrolase 17-like protein C (545 aa).

The 298-residue stretch at 51-348 (CGLQNTGNSC…NAYVLFYVQQ (298 aa)) folds into the USP domain. Cysteine 60 acts as the Nucleophile in catalysis. The active-site Proton acceptor is histidine 307. Disordered stretches follow at residues 368-442 (DPEY…QKLG) and 489-539 (WGRD…KQGQ). The span at 374–385 (KKSRRKKHKKKS) shows a compositional bias: basic residues. Composition is skewed to basic and acidic residues over residues 393-404 (EPCKNREKRATK) and 489-505 (WGRD…HNAD). Polar residues predominate over residues 508 to 519 (LTSQDPVNTGQL). A compositionally biased stretch (basic residues) spans 524 to 537 (GRRRSKKGKNKNKQ).

This sequence belongs to the peptidase C19 family. USP17 subfamily. As to expression, expressed in T cells.

It localises to the nucleus. Its subcellular location is the endoplasmic reticulum. The catalysed reaction is Thiol-dependent hydrolysis of ester, thioester, amide, peptide and isopeptide bonds formed by the C-terminal Gly of ubiquitin (a 76-residue protein attached to proteins as an intracellular targeting signal).. Functionally, deubiquitinating enzyme that removes conjugated ubiquitin from specific proteins to regulate different cellular processes. Important for preimplantation stage embryonic development. The chain is Ubiquitin carboxyl-terminal hydrolase 17-like protein C from Mus musculus (Mouse).